The primary structure comprises 589 residues: Phenylalanine--tRNA ligase beta subunit (589 aa).

The 78-residue stretch at 302–379 folds into the B5 domain; that stretch reads LPYRKEMVRA…IAYGYNNIQM (78 aa). Mg(2+)-binding residues include D357, D363, E366, and D367.

Belongs to the phenylalanyl-tRNA synthetase beta subunit family. Type 2 subfamily. As to quaternary structure, heterotetramer; dimer of two heterodimers formed by FARSA and FARSB. The cofactor is Mg(2+).

The protein localises to the cytoplasm. The enzyme catalyses tRNA(Phe) + L-phenylalanine + ATP = L-phenylalanyl-tRNA(Phe) + AMP + diphosphate + H(+). This Mus musculus (Mouse) protein is Phenylalanine--tRNA ligase beta subunit (Farsb).